Reading from the N-terminus, the 115-residue chain is Large ribosomal subunit protein bL31B (115 aa).

The protein belongs to the bacterial ribosomal protein bL31 family. Type B subfamily. In terms of assembly, part of the 50S ribosomal subunit.

The protein is Large ribosomal subunit protein bL31B of Polynucleobacter necessarius subsp. necessarius (strain STIR1).